A 299-amino-acid chain; its full sequence is MYFFRALLSPVVLWPALVSGKSNSNTANYTVEELWDLEVTFWDNFLYPANVKQVEAINSTLFTTEVQGRVDITRVFNGSELNTEYIFGLFSDPNHLSLVGVPIAYSITQFIAERNIASATTVVTFNATSFGNLLLPVTIDTWIMWDANGRIMQYDATFRWFGFLLDTLVEALATSINGTASQATAALTQLLATTVCDTHDKYCTGENQQYDNSTACYDFLTTAIPLGKDYELGRDTLLCREVHEHMVQYDPKMHCPHIGPTGGDYCVNDQTYEQKVLQKYFNVSWIVGVPWTGNIWLGD.

The signal sequence occupies residues 1 to 20 (MYFFRALLSPVVLWPALVSG). N-linked (GlcNAc...) asparagine glycans are attached at residues asparagine 28, asparagine 58, asparagine 77, asparagine 126, asparagine 177, asparagine 212, and asparagine 282.

This sequence belongs to the bfoA family.

Its pathway is secondary metabolite biosynthesis; terpenoid biosynthesis. In terms of biological role, acetyltransferase; part of the gene cluster that mediates the biosynthesis of an ophiobolin family sesterterpenoid. Sesterterpenoid synthase; part of the gene cluster that mediates the biosynthesis of an ophiobolin family sesterterpenoid. The sequence is that of Ophiobolin family sesterterpenoid biosynthesis cluster acetyltransferase from Aspergillus terreus.